Reading from the N-terminus, the 142-residue chain is Large ribosomal subunit protein uL11 (142 aa).

The protein belongs to the universal ribosomal protein uL11 family. Part of the ribosomal stalk of the 50S ribosomal subunit. Interacts with L10 and the large rRNA to form the base of the stalk. L10 forms an elongated spine to which L12 dimers bind in a sequential fashion forming a multimeric L10(L12)X complex. Post-translationally, one or more lysine residues are methylated.

Forms part of the ribosomal stalk which helps the ribosome interact with GTP-bound translation factors. In Shewanella halifaxensis (strain HAW-EB4), this protein is Large ribosomal subunit protein uL11.